Consider the following 215-residue polypeptide: Probable Rab-related GTPase (215 aa).

20–27 (GSSGVGKS) provides a ligand contact to GTP. The Effector region motif lies at 42–50 (VSPTIGAAF). GTP is bound by residues 69 to 73 (DTAGQ) and 127 to 130 (NKID). 2 S-geranylgeranyl cysteine; by host lipidation sites follow: C211 and C212. Residue C212 is modified to Cysteine methyl ester; by host. A propeptide spans 213-215 (YIS) (removed in mature form).

The protein belongs to the small GTPase superfamily. Rab family.

Its subcellular location is the host cell membrane. May be involved in protein transport. The sequence is that of Probable Rab-related GTPase from Acanthamoeba polyphaga mimivirus (APMV).